A 574-amino-acid polypeptide reads, in one-letter code: Man(5)GlcNAc(2)-PP-dolichol translocation protein RFT1 (574 aa).

Over methionine 1–threonine 24 the chain is Lumenal. The helical transmembrane segment at phenylalanine 25–isoleucine 45 threads the bilayer. At arginine 46–leucine 48 the chain is on the cytoplasmic side. Residues serine 49–phenylalanine 69 traverse the membrane as a helical segment. Residues serine 70–alanine 110 lie on the Lumenal side of the membrane. The helical transmembrane segment at valine 111–tryptophan 131 threads the bilayer. Residues glutamine 132–tryptophan 148 lie on the Cytoplasmic side of the membrane. A helical transmembrane segment spans residues serine 149–valine 169. Topologically, residues asparagine 170–arginine 181 are lumenal. A helical transmembrane segment spans residues phenylalanine 182 to glutamine 202. Over glutamine 203–glutamate 218 the chain is Cytoplasmic. The helical transmembrane segment at glycine 219–cysteine 239 threads the bilayer. Over tyrosine 240 to glutamine 319 the chain is Lumenal. The chain crosses the membrane as a helical span at residues glycine 320–isoleucine 340. Topologically, residues glutamate 341–arginine 372 are cytoplasmic. The chain crosses the membrane as a helical span at residues phenylalanine 373–leucine 393. The Lumenal portion of the chain corresponds to glutamine 394 to tyrosine 413. A helical membrane pass occupies residues cysteine 414–alanine 434. The Cytoplasmic portion of the chain corresponds to threonine 435–serine 443. A helical membrane pass occupies residues tyrosine 444–leucine 464. Residues lysine 465 to glutamate 469 are Lumenal-facing. Residues glycine 470 to leucine 490 traverse the membrane as a helical segment. Topologically, residues asparagine 491–aspartate 509 are cytoplasmic. The chain crosses the membrane as a helical span at residues phenylalanine 510–tyrosine 530. The Lumenal portion of the chain corresponds to valine 531–lysine 532. A helical transmembrane segment spans residues asparagine 533–valine 553. Residues lysine 554–valine 574 are Cytoplasmic-facing.

The protein belongs to the RFT1 family.

The protein localises to the endoplasmic reticulum membrane. It functions in the pathway protein modification; protein glycosylation. Its function is as follows. Intramembrane glycolipid transporter that operates in the biosynthetic pathway of dolichol-linked oligosaccharides, the glycan precursors employed in protein asparagine (N)-glycosylation. The sequential addition of sugars to dolichol pyrophosphate produces dolichol-linked oligosaccharides containing fourteen sugars, including two GlcNAcs, nine mannoses and three glucoses. Once assembled, the oligosaccharide is transferred from the lipid to nascent proteins by oligosaccharyltransferases. The assembly of dolichol-linked oligosaccharides begins on the cytosolic side of the endoplasmic reticulum membrane and finishes in its lumen. RFT1 could mediate the translocation of the cytosolically oriented intermediate DolPP-GlcNAc2Man5, produced by ALG11, into the ER lumen where dolichol-linked oligosaccharides assembly continues. However, the intramembrane lipid transporter activity could not be confirmed in vitro. The chain is Man(5)GlcNAc(2)-PP-dolichol translocation protein RFT1 from Saccharomyces cerevisiae (strain ATCC 204508 / S288c) (Baker's yeast).